A 125-amino-acid polypeptide reads, in one-letter code: Prepro-urotensin II-alpha (125 aa).

Positions M1–A21 are cleaved as a signal peptide. Positions Q109 to R111 are excised as a propeptide. A disulfide bridge connects residues C119 and C124.

It belongs to the urotensin-2 family.

The protein resides in the secreted. In terms of biological role, urotensin is found in the teleost caudal neurosecretory system. It has a suggested role in osmoregulation and as a corticotropin-releasing factor. The non-hormonal portion of this precursor may be a urotensin binding protein, urophysin. The protein is Prepro-urotensin II-alpha of Cyprinus carpio (Common carp).